The primary structure comprises 275 residues: 4-hydroxy-tetrahydrodipicolinate reductase (275 aa).

12-17 provides a ligand contact to NAD(+); it reads GAAGRM. NADP(+) is bound at residue arginine 39. Residues 102 to 104 and 126 to 129 contribute to the NAD(+) site; these read GTT and SGNM. The active-site Proton donor/acceptor is the histidine 160. Histidine 161 is a binding site for (S)-2,3,4,5-tetrahydrodipicolinate. Lysine 164 acts as the Proton donor in catalysis. 170–171 lines the (S)-2,3,4,5-tetrahydrodipicolinate pocket; the sequence is GT.

This sequence belongs to the DapB family.

The protein resides in the cytoplasm. The catalysed reaction is (S)-2,3,4,5-tetrahydrodipicolinate + NAD(+) + H2O = (2S,4S)-4-hydroxy-2,3,4,5-tetrahydrodipicolinate + NADH + H(+). It catalyses the reaction (S)-2,3,4,5-tetrahydrodipicolinate + NADP(+) + H2O = (2S,4S)-4-hydroxy-2,3,4,5-tetrahydrodipicolinate + NADPH + H(+). Its pathway is amino-acid biosynthesis; L-lysine biosynthesis via DAP pathway; (S)-tetrahydrodipicolinate from L-aspartate: step 4/4. Its function is as follows. Catalyzes the conversion of 4-hydroxy-tetrahydrodipicolinate (HTPA) to tetrahydrodipicolinate. This is 4-hydroxy-tetrahydrodipicolinate reductase from Agrobacterium fabrum (strain C58 / ATCC 33970) (Agrobacterium tumefaciens (strain C58)).